The chain runs to 141 residues: uncharacterized protein (141 aa).

The HIT domain occupies 10–117 (IFCDIVQGSI…VPKYETGKGF (108 aa)). Positions 102–106 (HFHLH) match the Histidine triad motif motif.

This is an uncharacterized protein from Mycoplasma genitalium (strain ATCC 33530 / DSM 19775 / NCTC 10195 / G37) (Mycoplasmoides genitalium).